We begin with the raw amino-acid sequence, 172 residues long: Translationally-controlled tumor protein (172 aa).

The region spanning 1-172 (MIIYRDLISH…FKDGLEMEKC (172 aa)) is the TCTP domain. Ser46 is subject to Phosphoserine; by PLK1. Position 53 is a phosphoserine (Ser53). Ser64 carries the phosphoserine; by PLK1 modification. Positions 70–172 (VDIVMNHHLQ…FKDGLEMEKC (103 aa)) are required for reduction of TSC22D1 protein stability.

It belongs to the TCTP family. Homodimer. Interacts with STEAP3. Interacts with TSC22D1; interaction results in the destabilization of TSC22D1 protein.

The protein resides in the cytoplasm. Its function is as follows. Involved in calcium binding and microtubule stabilization. Acts as a negative regulator of TSC22D1-mediated apoptosis, via interaction with and destabilization of TSC22D1 protein. The sequence is that of Translationally-controlled tumor protein (TPT1) from Bos taurus (Bovine).